A 307-amino-acid polypeptide reads, in one-letter code: GTPase Era (307 aa).

The region spanning 17 to 186 (RCGFVAIVGR…LELLKPYLPE (170 aa)) is the Era-type G domain. The segment at 25-32 (GRPNVGKS) is G1. A GTP-binding site is contributed by 25 to 32 (GRPNVGKS). A G2 region spans residues 51-55 (QTTRN). The interval 72–75 (DTPG) is G3. Residues 72-76 (DTPGF) and 133-136 (NKID) each bind GTP. The interval 133–136 (NKID) is G4. Residues 165–167 (VSA) form a G5 region. Residues 217-293 (LGEELPYAMN…FLKVWVKVKS (77 aa)) enclose the KH type-2 domain.

The protein belongs to the TRAFAC class TrmE-Era-EngA-EngB-Septin-like GTPase superfamily. Era GTPase family. In terms of assembly, monomer.

The protein localises to the cytoplasm. It localises to the cell inner membrane. Its function is as follows. An essential GTPase that binds both GDP and GTP, with rapid nucleotide exchange. Plays a role in 16S rRNA processing and 30S ribosomal subunit biogenesis and possibly also in cell cycle regulation and energy metabolism. The protein is GTPase Era of Neisseria meningitidis serogroup C / serotype 2a (strain ATCC 700532 / DSM 15464 / FAM18).